Here is a 251-residue protein sequence, read N- to C-terminus: Small ribosomal subunit protein uS2 (251 aa).

This sequence belongs to the universal ribosomal protein uS2 family.

This is Small ribosomal subunit protein uS2 from Chlorobium chlorochromatii (strain CaD3).